Here is a 277-residue protein sequence, read N- to C-terminus: Diaminopimelate epimerase (277 aa).

Asn-11 and Asn-65 together coordinate substrate. The Proton donor role is filled by Cys-74. Residues Gly-75–Asn-76, Asn-180, and Glu-198–Arg-199 contribute to the substrate site. Cys-208 serves as the catalytic Proton acceptor. Gly-209–Thr-210 contributes to the substrate binding site.

It belongs to the diaminopimelate epimerase family. In terms of assembly, homodimer.

It is found in the cytoplasm. The catalysed reaction is (2S,6S)-2,6-diaminopimelate = meso-2,6-diaminopimelate. It functions in the pathway amino-acid biosynthesis; L-lysine biosynthesis via DAP pathway; DL-2,6-diaminopimelate from LL-2,6-diaminopimelate: step 1/1. Catalyzes the stereoinversion of LL-2,6-diaminopimelate (L,L-DAP) to meso-diaminopimelate (meso-DAP), a precursor of L-lysine and an essential component of the bacterial peptidoglycan. This Gemmatimonas aurantiaca (strain DSM 14586 / JCM 11422 / NBRC 100505 / T-27) protein is Diaminopimelate epimerase.